The primary structure comprises 304 residues: N-acetyl-D-glucosamine kinase (304 aa).

ATP is bound by residues 4 to 11 (GFDMGGTK) and 133 to 140 (GVGGGLIV). 4 residues coordinate Zn(2+): H157, C177, C179, and C184.

This sequence belongs to the ROK (NagC/XylR) family. NagK subfamily.

It catalyses the reaction N-acetyl-D-glucosamine + ATP = N-acetyl-D-glucosamine 6-phosphate + ADP + H(+). It functions in the pathway cell wall biogenesis; peptidoglycan recycling. Functionally, catalyzes the phosphorylation of N-acetyl-D-glucosamine (GlcNAc) derived from cell-wall degradation, yielding GlcNAc-6-P. In Yersinia pseudotuberculosis serotype O:3 (strain YPIII), this protein is N-acetyl-D-glucosamine kinase.